A 529-amino-acid chain; its full sequence is T-complex protein 1 subunit delta (529 aa).

It belongs to the TCP-1 chaperonin family. Heterooligomeric complex of about 850 to 900 kDa that forms two stacked rings, 12 to 16 nm in diameter.

The protein localises to the cytoplasm. Molecular chaperone; assists the folding of proteins upon ATP hydrolysis. Known to play a role, in vitro, in the folding of actin and tubulin. In Eremothecium gossypii (strain ATCC 10895 / CBS 109.51 / FGSC 9923 / NRRL Y-1056) (Yeast), this protein is T-complex protein 1 subunit delta (CCT4).